Here is a 502-residue protein sequence, read N- to C-terminus: Cytochrome P450 monooxygenase verC (502 aa).

A helical transmembrane segment spans residues 9 to 29 (IAALPMVSLLGAALIVVSVLG). Residues N124, N190, N271, and N342 are each glycosylated (N-linked (GlcNAc...) asparagine). A heme-binding site is contributed by C444.

Belongs to the cytochrome P450 family. Heme serves as cofactor.

Its subcellular location is the membrane. It functions in the pathway mycotoxin biosynthesis. In terms of biological role, cytochrome P450 monooxygenase; part of the gene cluster that mediates the biosynthesis of 11'-deoxyverticillin A, one of the dimeric epipolythiodioxopiperazines (ETPs) from the verticillin family that act as mycotoxins. 11'-deoxyverticillin A is required for normal conidiation. The nonribosomal peptide synthetase verP is speculated to be responsible for condensation of amino acids to form the carbon skeleton of verticillin, whereas the cluster-specific tailoring enzymes are involved in further modifications leading to the production of 11'-deoxyverticillin A. The chain is Cytochrome P450 monooxygenase verC from Clonostachys rogersoniana.